A 253-amino-acid polypeptide reads, in one-letter code: MLKTRVIPCLDVADGRVVKGVNFVDLRDAGDPVEAARAYDAAGADEICFLDIHATHENRGTMYDLVTRTAEACFVPLTVGGGVRSHQDVRALLLAGADKVSFNSAAVANPDVIAEAADRFGSQCIVCAIDAKTVAPGKWEIFTHGGRKPTGIDAVEFARTVAAKGAGEILLTSMDRDGTKSGFNIPLTRAVADAVTIPVIASGGVGMLEHLAEGVLEGHASAVLAASIFHFGTFTVREAKEHLAAAGIPVRLT.

Active-site residues include D11 and D130.

Belongs to the HisA/HisF family. Heterodimer of HisH and HisF.

Its subcellular location is the cytoplasm. The enzyme catalyses 5-[(5-phospho-1-deoxy-D-ribulos-1-ylimino)methylamino]-1-(5-phospho-beta-D-ribosyl)imidazole-4-carboxamide + L-glutamine = D-erythro-1-(imidazol-4-yl)glycerol 3-phosphate + 5-amino-1-(5-phospho-beta-D-ribosyl)imidazole-4-carboxamide + L-glutamate + H(+). The protein operates within amino-acid biosynthesis; L-histidine biosynthesis; L-histidine from 5-phospho-alpha-D-ribose 1-diphosphate: step 5/9. Its function is as follows. IGPS catalyzes the conversion of PRFAR and glutamine to IGP, AICAR and glutamate. The HisF subunit catalyzes the cyclization activity that produces IGP and AICAR from PRFAR using the ammonia provided by the HisH subunit. The protein is Imidazole glycerol phosphate synthase subunit HisF of Paracoccus denitrificans (strain Pd 1222).